The chain runs to 122 residues: Large ribosomal subunit protein uL14 (122 aa).

This sequence belongs to the universal ribosomal protein uL14 family. As to quaternary structure, part of the 50S ribosomal subunit. Forms a cluster with proteins L3 and L19. In the 70S ribosome, L14 and L19 interact and together make contacts with the 16S rRNA in bridges B5 and B8.

In terms of biological role, binds to 23S rRNA. Forms part of two intersubunit bridges in the 70S ribosome. This Acetivibrio thermocellus (strain ATCC 27405 / DSM 1237 / JCM 9322 / NBRC 103400 / NCIMB 10682 / NRRL B-4536 / VPI 7372) (Clostridium thermocellum) protein is Large ribosomal subunit protein uL14.